The chain runs to 29 residues: Glucagon (29 aa).

This sequence belongs to the glucagon family.

It localises to the secreted. Glucagon plays a key role in glucose metabolism and homeostasis. Regulates blood glucose by increasing gluconeogenesis and decreasing glycolysis. In Callorhinchus milii (Ghost shark), this protein is Glucagon (gcg).